A 1415-amino-acid chain; its full sequence is DNA-directed RNA polymerase subunit beta' (1415 aa).

Zn(2+)-binding residues include cysteine 71, cysteine 73, cysteine 86, and cysteine 89. The Mg(2+) site is built by aspartate 461, aspartate 463, and aspartate 465. 4 residues coordinate Zn(2+): cysteine 815, cysteine 889, cysteine 896, and cysteine 899.

Belongs to the RNA polymerase beta' chain family. As to quaternary structure, the RNAP catalytic core consists of 2 alpha, 1 beta, 1 beta' and 1 omega subunit. When a sigma factor is associated with the core the holoenzyme is formed, which can initiate transcription. It depends on Mg(2+) as a cofactor. Zn(2+) is required as a cofactor.

The catalysed reaction is RNA(n) + a ribonucleoside 5'-triphosphate = RNA(n+1) + diphosphate. In terms of biological role, DNA-dependent RNA polymerase catalyzes the transcription of DNA into RNA using the four ribonucleoside triphosphates as substrates. The chain is DNA-directed RNA polymerase subunit beta' from Haemophilus influenzae (strain ATCC 51907 / DSM 11121 / KW20 / Rd).